A 229-amino-acid polypeptide reads, in one-letter code: Protein-L-isoaspartate O-methyltransferase (229 aa).

Ser74 is an active-site residue.

The protein belongs to the methyltransferase superfamily. L-isoaspartyl/D-aspartyl protein methyltransferase family.

It localises to the cytoplasm. It carries out the reaction [protein]-L-isoaspartate + S-adenosyl-L-methionine = [protein]-L-isoaspartate alpha-methyl ester + S-adenosyl-L-homocysteine. In terms of biological role, catalyzes the methyl esterification of L-isoaspartyl residues in peptides and proteins that result from spontaneous decomposition of normal L-aspartyl and L-asparaginyl residues. It plays a role in the repair and/or degradation of damaged proteins. This chain is Protein-L-isoaspartate O-methyltransferase, found in Pelotomaculum thermopropionicum (strain DSM 13744 / JCM 10971 / SI).